A 521-amino-acid polypeptide reads, in one-letter code: 2-isopropylmalate synthase (521 aa).

Residues 5–267 (VIIFDTTLRD…HTNIKHQEIH (263 aa)) enclose the Pyruvate carboxyltransferase domain. Residues Asp-14, His-202, His-204, and Asn-238 each coordinate Mn(2+). The segment at 392 to 521 (KLNYLSVQSG…FAQKTVMETL (130 aa)) is regulatory domain.

Belongs to the alpha-IPM synthase/homocitrate synthase family. LeuA type 1 subfamily. As to quaternary structure, homodimer. Mn(2+) serves as cofactor.

Its subcellular location is the cytoplasm. The enzyme catalyses 3-methyl-2-oxobutanoate + acetyl-CoA + H2O = (2S)-2-isopropylmalate + CoA + H(+). It functions in the pathway amino-acid biosynthesis; L-leucine biosynthesis; L-leucine from 3-methyl-2-oxobutanoate: step 1/4. Its function is as follows. Catalyzes the condensation of the acetyl group of acetyl-CoA with 3-methyl-2-oxobutanoate (2-ketoisovalerate) to form 3-carboxy-3-hydroxy-4-methylpentanoate (2-isopropylmalate). This chain is 2-isopropylmalate synthase, found in Tolumonas auensis (strain DSM 9187 / NBRC 110442 / TA 4).